We begin with the raw amino-acid sequence, 141 residues long: Metallothiol transferase FosB (141 aa).

The VOC domain maps to 5 to 120 (SINHLLFSVS…DGHKFEFHTG (116 aa)). His8, His67, and Glu116 together coordinate Mg(2+). Residue Glu116 is the Proton donor/acceptor of the active site.

This sequence belongs to the fosfomycin resistance protein family. FosB subfamily. As to quaternary structure, homodimer. Requires Mg(2+) as cofactor.

It is found in the cytoplasm. Functionally, metallothiol transferase which confers resistance to fosfomycin by catalyzing the addition of a thiol cofactor to fosfomycin. L-cysteine is probably the physiological thiol donor. The polypeptide is Metallothiol transferase FosB (Lysinibacillus sphaericus (strain C3-41)).